A 428-amino-acid chain; its full sequence is MSDVAVMILAGGQGERLSILSRQRAKPAVPFGGKYRIIDFALSNCVNSGLYDVAVLTQYRPHSLNEHIGHGRPWDLDRERNGGVVILQPYLGRSTSGWYRGTADAVYHNLFYITRRPYRDVLILAGDHVYAMDYRPMIAQHRERCADVTIAVQPVDWREASRFGVVIVAEDGWVVDFEEKPERPRSNLASMGIYLFRRNLLLDLFTRDHPDAPEFIDFGRDVIPYLIRTARVATYRFDGYWQDVGTVQSYWEANMALLEDEPKLNLYDPNWRIHTRSEERPPAKILEGATVIRSLLSNGCIVEGATVIRSILSPGVIVKAGAVVRDSIVMTDSVIGPGAVVDRCIIDKHVTIGANAYLGWGDDNSPNWLEPSRLNTGITLVGRNAVVPPGVRIGRNVLIGPEVKESDFPGAVVPSGETVNPIATVVWS.

Residues Tyr-99, Gly-164, 179 to 180 (EK), and Ser-190 each bind alpha-D-glucose 1-phosphate.

Belongs to the bacterial/plant glucose-1-phosphate adenylyltransferase family. Homotetramer.

It carries out the reaction alpha-D-glucose 1-phosphate + ATP + H(+) = ADP-alpha-D-glucose + diphosphate. It participates in glycan biosynthesis; glycogen biosynthesis. Its function is as follows. Involved in the biosynthesis of ADP-glucose, a building block required for the elongation reactions to produce glycogen. Catalyzes the reaction between ATP and alpha-D-glucose 1-phosphate (G1P) to produce pyrophosphate and ADP-Glc. The chain is Glucose-1-phosphate adenylyltransferase from Thermomicrobium roseum (strain ATCC 27502 / DSM 5159 / P-2).